Consider the following 611-residue polypeptide: Menin (611 aa).

Positions 214–390 (GVAERSWLYL…SLLETGEERT (177 aa)) are interaction with FANCD2. The tract at residues 460 to 553 (REAEAAEAEE…SPPPEGPVLT (94 aa)) is disordered. Residues 484–500 (RRESKPEEPPPPKKPAL) are compositionally biased toward basic and acidic residues. A phosphoserine mark is found at serine 487 and serine 544. Threonine 595 carries the post-translational modification Phosphothreonine.

As to quaternary structure, component of the MLL-HCF complex, at least composed of KMT2A/MLL1, MEN1, ASH2L, RBBP5, DPY30, WDR5, HCFC1 and HCFC2. Component of the menin-associated histone methyltransferase complex, at least composed of KMT2B/MLL4, MEN1, ASH2L, RBBP5, DPY30 and WDR5. Interacts with POLR2B. Interacts with POLR2A phosphorylated at 'Ser-5', but not with the unphosphorylated, nor 'Ser-2' phosphorylated POLR2A forms. Interacts with FANCD2 and DBF4. Interacts with SMAD3, but not with SMAD2, nor SMAD4. Directly interacts with NFKB1, NFKB2 and RELA. Interacts with JUND (via MBM motif); inhibits the interaction of JUND with MAPK10 and the phosphorylation of JUND by MAP kinases MAPK8 and MAPK10. Interacts with KMT2A (via MBM motif). The KMT2A-MEN1 complex interacts with PSIP1 with a greater affinity as MEN1 enhances interaction of KMT2A with PSIP1. In terms of tissue distribution, widely expressed, with high levels in hippocampus, cerebral cortex, testis and thymus (at protein level). Also expressed at high levels in pancreatic islets, ovary and bone marrow. In the brain, highest expression in hippocampus pyramidal nerve cells (at protein level). In the testis, may be expressed in spermatogonia (at protein level). Low expression, if any, in skeletal muscle.

The protein resides in the nucleus. Essential component of a MLL/SET1 histone methyltransferase (HMT) complex, a complex that specifically methylates 'Lys-4' of histone H3 (H3K4). Functions as a transcriptional regulator. Binds to the TERT promoter and represses telomerase expression. Plays a role in TGFB1-mediated inhibition of cell-proliferation, possibly regulating SMAD3 transcriptional activity. Represses JUND-mediated transcriptional activation on AP1 sites, as well as that mediated by NFKB subunit RELA. Positively regulates HOXC8 and HOXC6 gene expression. May be involved in normal hematopoiesis through the activation of HOXA9 expression. May be involved in DNA repair. The chain is Menin (Men1) from Mus musculus (Mouse).